A 203-amino-acid polypeptide reads, in one-letter code: E3 ubiquitin-protein ligase RNF152 (203 aa).

Residues 12–55 (CQICFNYYSPRRRPKLLDCKHTCCSVCLQQMRTSQKDVRCPWCR) form an RING-type zinc finger. The necessary for interaction with RRAGA stretch occupies residues 106 to 165 (ISKERTLLPGDMGCRLLPGSQQKSLTVVTIPAEQQPLQGGAPPEAVEEEPDRRGVVKSST). Positions 139 to 158 (QQPLQGGAPPEAVEEEPDRR) are disordered. Residues 167–187 (SGVCTVILVACVLVFLLGIVL) traverse the membrane as a helical segment.

Belongs to the RNF152 family. In terms of assembly, interacts with RRAGA (inactive GDP-bound form); stimulated by amino acid starvation. Interacts with SEC16A. Post-translationally, ubiquitinated. Autoubiquitinated in vitro, leading to its degradation by the proteasome.

The protein localises to the lysosome membrane. It catalyses the reaction S-ubiquitinyl-[E2 ubiquitin-conjugating enzyme]-L-cysteine + [acceptor protein]-L-lysine = [E2 ubiquitin-conjugating enzyme]-L-cysteine + N(6)-ubiquitinyl-[acceptor protein]-L-lysine.. Its pathway is protein modification; protein ubiquitination. Its function is as follows. E3 ubiquitin-protein ligase that acts as a negative regulator of mTORC1 signaling by mediating ubiquitination of RagA/RRAGA and RHEB. Catalyzes 'Lys-63'-linked polyubiquitination of RagA/RRAGA in response to amino acid starvation, thereby regulating mTORC1 signaling. Also mediates monoubiquitination of RHEB, promoting its association with the TSC-TBC complex and subsequent inhibition. Also mediates 'Lys-48'-linked polyubiquitination of target proteins and their subsequent targeting to the proteasome for degradation. Induces apoptosis when overexpressed. This Mus musculus (Mouse) protein is E3 ubiquitin-protein ligase RNF152.